The following is a 397-amino-acid chain: Enoyl-[acyl-carrier-protein] reductase [NADH] (397 aa).

NAD(+)-binding positions include 48–53, 74–75, 111–112, and 139–140; these read GASTGY, FE, DA, and LA. Tyrosine 224 is a substrate binding site. The Proton donor role is filled by tyrosine 234. NAD(+) contacts are provided by residues lysine 243 and 272-274; that span reads VVT.

This sequence belongs to the TER reductase family. As to quaternary structure, monomer.

It catalyses the reaction a 2,3-saturated acyl-[ACP] + NAD(+) = a (2E)-enoyl-[ACP] + NADH + H(+). The protein operates within lipid metabolism; fatty acid biosynthesis. Its function is as follows. Involved in the final reduction of the elongation cycle of fatty acid synthesis (FAS II). Catalyzes the reduction of a carbon-carbon double bond in an enoyl moiety that is covalently linked to an acyl carrier protein (ACP). This chain is Enoyl-[acyl-carrier-protein] reductase [NADH], found in Pseudomonas fluorescens (strain SBW25).